Here is a 470-residue protein sequence, read N- to C-terminus: Tert-butanol monooxygenase / tert-amyl alcohol desaturase oxygenase subunit (470 aa).

The region spanning 51–155 is the Rieske domain; the sequence is WQPVCLSQEL…AFERNGLVFA (105 aa). Residues Cys91, His93, Cys110, and His113 each coordinate [2Fe-2S] cluster.

The protein belongs to the bacterial ring-hydroxylating dioxygenase alpha subunit family. This two-component enzyme is composed of an oxygenase (MdpJ) and a reductase (MdpK). [2Fe-2S] cluster serves as cofactor.

It carries out the reaction tert-butanol + NADPH + O2 + H(+) = 2-methylpropane-1,2-diol + NADP(+) + H2O. It catalyses the reaction 2-methylbutan-2-ol + NADPH + O2 + H(+) = 3-hydroxy-3-methylbut-1-ene + NADP(+) + 2 H2O. Functionally, oxygenase component of a two-component system involved in the degradation of tertiary alcohols such as tert-butyl alcohol (TBA) and tert-amyl alcohol (TAA). In the presence of TBA, catalyzes the hydroxylation of TBA to 2-methylpropane-1,2-diol. In the presence of TAA, functions as a desaturase, enabling the degradation of TAA and resulting in the formation of the hemiterpene 3-hydroxy-3-methylbut-1-ene. The specificity of the catalysis depends strongly on the molecule structure of the substrate, allowing either hydroxylation or desaturation reactions. Also catalyzes the desaturation of the tertiary alcohol 3-methyl-3-pentanol (a C6 homolog of TBA and TAA) to 3-methyl-1-penten-3-ol, with lower efficiency. In addition, can transform some secondary alcohols, including the hydroxylation of 2-propanol to 1,2-propanediol, and the desaturation of 2-butanol, 3-methyl-2-butanol and 3-pentanol. The polypeptide is Tert-butanol monooxygenase / tert-amyl alcohol desaturase oxygenase subunit (Aquincola tertiaricarbonis).